We begin with the raw amino-acid sequence, 68 residues long: MAVPFRRTGKTAKRKRRTHYKLSNPALVLCKETNTFTLSHRVTKNSGYYKGKLILENKPSKAQKTTDN.

The protein belongs to the bacterial ribosomal protein bL32 family.

This is Large ribosomal subunit protein bL32 from Onion yellows phytoplasma (strain OY-M).